Here is a 618-residue protein sequence, read N- to C-terminus: Dihydroxy-acid dehydratase (618 aa).

A Mg(2+)-binding site is contributed by Asp-81. Cys-122 lines the [2Fe-2S] cluster pocket. The Mg(2+) site is built by Asp-123 and Lys-124. Position 124 is an N6-carboxylysine (Lys-124). [2Fe-2S] cluster is bound at residue Cys-195. Glu-493 contacts Mg(2+). Ser-519 acts as the Proton acceptor in catalysis.

The protein belongs to the IlvD/Edd family. Homodimer. It depends on [2Fe-2S] cluster as a cofactor. Mg(2+) serves as cofactor.

It carries out the reaction (2R)-2,3-dihydroxy-3-methylbutanoate = 3-methyl-2-oxobutanoate + H2O. It catalyses the reaction (2R,3R)-2,3-dihydroxy-3-methylpentanoate = (S)-3-methyl-2-oxopentanoate + H2O. It functions in the pathway amino-acid biosynthesis; L-isoleucine biosynthesis; L-isoleucine from 2-oxobutanoate: step 3/4. It participates in amino-acid biosynthesis; L-valine biosynthesis; L-valine from pyruvate: step 3/4. Its function is as follows. Functions in the biosynthesis of branched-chain amino acids. Catalyzes the dehydration of (2R,3R)-2,3-dihydroxy-3-methylpentanoate (2,3-dihydroxy-3-methylvalerate) into 2-oxo-3-methylpentanoate (2-oxo-3-methylvalerate) and of (2R)-2,3-dihydroxy-3-methylbutanoate (2,3-dihydroxyisovalerate) into 2-oxo-3-methylbutanoate (2-oxoisovalerate), the penultimate precursor to L-isoleucine and L-valine, respectively. The polypeptide is Dihydroxy-acid dehydratase (Shewanella amazonensis (strain ATCC BAA-1098 / SB2B)).